Reading from the N-terminus, the 115-residue chain is Nitrogen regulatory protein P-II 2 (115 aa).

Tyrosine 54 carries the post-translational modification O-UMP-tyrosine.

It belongs to the P(II) protein family.

Functionally, could be involved in the regulation of nitrogen fixation. The protein is Nitrogen regulatory protein P-II 2 of Methanothermobacter thermautotrophicus (strain ATCC 29096 / DSM 1053 / JCM 10044 / NBRC 100330 / Delta H) (Methanobacterium thermoautotrophicum).